Consider the following 103-residue polypeptide: Small ribosomal subunit protein uS10 (103 aa).

This sequence belongs to the universal ribosomal protein uS10 family. In terms of assembly, part of the 30S ribosomal subunit.

Its function is as follows. Involved in the binding of tRNA to the ribosomes. In Pseudoalteromonas atlantica (strain T6c / ATCC BAA-1087), this protein is Small ribosomal subunit protein uS10.